A 269-amino-acid polypeptide reads, in one-letter code: Formamidopyrimidine-DNA glycosylase (269 aa).

The active-site Schiff-base intermediate with DNA is the Pro2. Glu3 serves as the catalytic Proton donor. Lys57 functions as the Proton donor; for beta-elimination activity in the catalytic mechanism. DNA is bound by residues His90, Arg109, and Lys150. Residues 235 to 269 (QVYGRAGEPCRACGTPIESAKHGQRSTFFCPRCQR) form an FPG-type zinc finger. Arg259 functions as the Proton donor; for delta-elimination activity in the catalytic mechanism.

This sequence belongs to the FPG family. In terms of assembly, monomer. Zn(2+) serves as cofactor.

It carries out the reaction Hydrolysis of DNA containing ring-opened 7-methylguanine residues, releasing 2,6-diamino-4-hydroxy-5-(N-methyl)formamidopyrimidine.. The enzyme catalyses 2'-deoxyribonucleotide-(2'-deoxyribose 5'-phosphate)-2'-deoxyribonucleotide-DNA = a 3'-end 2'-deoxyribonucleotide-(2,3-dehydro-2,3-deoxyribose 5'-phosphate)-DNA + a 5'-end 5'-phospho-2'-deoxyribonucleoside-DNA + H(+). Involved in base excision repair of DNA damaged by oxidation or by mutagenic agents. Acts as a DNA glycosylase that recognizes and removes damaged bases. Has a preference for oxidized purines, such as 7,8-dihydro-8-oxoguanine (8-oxoG). Has AP (apurinic/apyrimidinic) lyase activity and introduces nicks in the DNA strand. Cleaves the DNA backbone by beta-delta elimination to generate a single-strand break at the site of the removed base with both 3'- and 5'-phosphates. The sequence is that of Formamidopyrimidine-DNA glycosylase from Serratia proteamaculans (strain 568).